Here is a 357-residue protein sequence, read N- to C-terminus: GTPase Obg (357 aa).

Positions 1-158 (MFVDNIKLKV…LEIVLELKLI (158 aa)) constitute an Obg domain. In terms of domain architecture, OBG-type G spans 159–345 (ADVGLVGFPN…LKFALFDLVE (187 aa)). GTP-binding positions include 165 to 172 (GFPNAGKS), 190 to 194 (FTTLT), 212 to 215 (DIPG), 280 to 283 (TKCD), and 326 to 328 (SSV). Mg(2+) is bound by residues serine 172 and threonine 192.

This sequence belongs to the TRAFAC class OBG-HflX-like GTPase superfamily. OBG GTPase family. As to quaternary structure, monomer. Mg(2+) serves as cofactor.

The protein localises to the cytoplasm. Its function is as follows. An essential GTPase which binds GTP, GDP and possibly (p)ppGpp with moderate affinity, with high nucleotide exchange rates and a fairly low GTP hydrolysis rate. Plays a role in control of the cell cycle, stress response, ribosome biogenesis and in those bacteria that undergo differentiation, in morphogenesis control. In Nautilia profundicola (strain ATCC BAA-1463 / DSM 18972 / AmH), this protein is GTPase Obg.